Reading from the N-terminus, the 390-residue chain is Phosphopentomutase (390 aa).

Mn(2+) is bound by residues aspartate 11, aspartate 283, histidine 288, aspartate 324, histidine 325, and histidine 336.

It belongs to the phosphopentomutase family. Requires Mn(2+) as cofactor.

The protein resides in the cytoplasm. It catalyses the reaction 2-deoxy-alpha-D-ribose 1-phosphate = 2-deoxy-D-ribose 5-phosphate. The catalysed reaction is alpha-D-ribose 1-phosphate = D-ribose 5-phosphate. Its pathway is carbohydrate degradation; 2-deoxy-D-ribose 1-phosphate degradation; D-glyceraldehyde 3-phosphate and acetaldehyde from 2-deoxy-alpha-D-ribose 1-phosphate: step 1/2. In terms of biological role, isomerase that catalyzes the conversion of deoxy-ribose 1-phosphate (dRib-1-P) and ribose 1-phosphate (Rib-1-P) to deoxy-ribose 5-phosphate (dRib-5-P) and ribose 5-phosphate (Rib-5-P), respectively. This is Phosphopentomutase from Alkaliphilus metalliredigens (strain QYMF).